The following is a 394-amino-acid chain: MNKKSIRDVDLKGKRVFCRVDFNVPMKEGKITDETRIRAALPTIQYLVEQGAKVILASHLGRPKGQVVEEMRLTPVAARLGELLGKDVKKADEAFGPAVQEMVAAMNEGDVLVLENVRFYAGEEKNDAELAKEFAALADIFVNDAFGAAHRAHASTAGIADYLPAVSGLLMEKELDVLGKALSNPDRPFTAIIGGAKVKDKIGVIRHLLDKVDNLIIGGGLAYTFVKALGHEIGLSLCEDDKIELAKEFMQLAKEKGVNFYMPVDVVITEEFSETATTKIVNIDSIPSNWEGVDIGPKTREIYADVIKNSKLVVWNGPMGVFEMTPFAEGTKAVGQALADAEGTYSVIGGGDSAAAVEKFGMADKMSHISTGGGASLEFMEGKELPGVVCLNDK.

Residues 21–23 (DFN), arginine 36, 59–62 (HLGR), arginine 118, and arginine 151 each bind substrate. Phosphoserine is present on serine 183. Lysine 201 and glycine 292 together coordinate ATP. A Phosphothreonine modification is found at threonine 299. ATP is bound by residues glutamate 323 and 350–353 (GGDS).

This sequence belongs to the phosphoglycerate kinase family. As to quaternary structure, monomer.

It localises to the cytoplasm. It carries out the reaction (2R)-3-phosphoglycerate + ATP = (2R)-3-phospho-glyceroyl phosphate + ADP. The protein operates within carbohydrate degradation; glycolysis; pyruvate from D-glyceraldehyde 3-phosphate: step 2/5. The sequence is that of Phosphoglycerate kinase from Bacillus cereus (strain ATCC 10987 / NRS 248).